The chain runs to 313 residues: Malate dehydrogenase (313 aa).

NAD(+) contacts are provided by residues 8–13 (GAGNVG) and D33. R83 and R89 together coordinate substrate. NAD(+)-binding positions include N96 and 119–121 (ISN). Substrate is bound by residues N121 and R152. The Proton acceptor role is filled by H176.

The protein belongs to the LDH/MDH superfamily. MDH type 3 family.

The catalysed reaction is (S)-malate + NAD(+) = oxaloacetate + NADH + H(+). Its function is as follows. Catalyzes the reversible oxidation of malate to oxaloacetate. This is Malate dehydrogenase from Bacteroides thetaiotaomicron (strain ATCC 29148 / DSM 2079 / JCM 5827 / CCUG 10774 / NCTC 10582 / VPI-5482 / E50).